A 181-amino-acid chain; its full sequence is MTLEQNYTAILGQLGEDVSREGLLDTPKRAAKAMQYLCRGYAQTLEEVTNGALFSSDASEMVMVKDIELYSLCEHHLLPFIGKAHVAYIPNGKVLGLSKVARIVDMYARRLQIQENLSRQIAEAIQQVTGAQGVAVVIEAKHMCMMMRGVEKQNSAMITSVMLGEFRENAATRSEFLSLIK.

Belongs to the GTP cyclohydrolase I family. In terms of assembly, homomer.

It catalyses the reaction GTP + H2O = 7,8-dihydroneopterin 3'-triphosphate + formate + H(+). It participates in cofactor biosynthesis; 7,8-dihydroneopterin triphosphate biosynthesis; 7,8-dihydroneopterin triphosphate from GTP: step 1/1. In Pseudomonas syringae pv. tomato (strain ATCC BAA-871 / DC3000), this protein is GTP cyclohydrolase 1 2.